Here is a 688-residue protein sequence, read N- to C-terminus: Translation initiation factor IF-2 (688 aa).

Basic and acidic residues-rich tracts occupy residues glycine 53 to glutamate 62 and lysine 86 to asparagine 95. A disordered region spans residues glycine 53 to glutamate 100. The tr-type G domain occupies lysine 187–glutamate 354. The G1 stretch occupies residues glycine 196–threonine 203. Position 196-203 (glycine 196–threonine 203) interacts with GTP. Residues glycine 221–histidine 225 are G2. Residues aspartate 242–glycine 245 form a G3 region. GTP is bound by residues aspartate 242 to histidine 246 and asparagine 296 to aspartate 299. The tract at residues asparagine 296–aspartate 299 is G4. Residues serine 332–histidine 334 are G5.

This sequence belongs to the TRAFAC class translation factor GTPase superfamily. Classic translation factor GTPase family. IF-2 subfamily.

Its subcellular location is the cytoplasm. In terms of biological role, one of the essential components for the initiation of protein synthesis. Protects formylmethionyl-tRNA from spontaneous hydrolysis and promotes its binding to the 30S ribosomal subunits. Also involved in the hydrolysis of GTP during the formation of the 70S ribosomal complex. The chain is Translation initiation factor IF-2 from Clostridium botulinum (strain Loch Maree / Type A3).